Consider the following 1722-residue polypeptide: Signal-induced proliferation-associated 1-like protein 2 (1722 aa).

Residues 1 to 12 (MSDPRQSQEEKH) are compositionally biased toward basic and acidic residues. Disordered stretches follow at residues 1 to 29 (MSDPRQSQEEKHKLGRASSKFKDPPRIMQ) and 42 to 72 (NGNMGPTTSLNASNSNETGGGGPANGTPAVP). Polar residues predominate over residues 45–56 (MGPTTSLNASNS). Ser148 bears the Phosphoserine mark. Positions 360–377 (GASAASQTQMPTGQTGNC) are enriched in polar residues. The interval 360–401 (GASAASQTQMPTGQTGNCESPLGSKEDLNSKENLDADEGDGK) is disordered. A phosphoserine mark is found at Ser379 and Ser383. Over residues 383–401 (SKEDLNSKENLDADEGDGK) the composition is skewed to basic and acidic residues. The 218-residue stretch at 595-812 (LLKLDEQGLS…RTRQEYLKDL (218 aa)) folds into the Rap-GAP domain. The region spanning 950 to 1026 (EMTLRRNGLG…VKVVIIQPHD (77 aa)) is the PDZ domain. Ser1029 bears the Phosphoserine mark. Disordered regions lie at residues 1067 to 1245 (HRVP…FGSG) and 1330 to 1360 (EGSMGDLSEISSHSSGSHHSGSPSAHCSKSS). Low complexity-rich tracts occupy residues 1093–1102 (QQLLQQAQAA) and 1119–1130 (SSPSNQSSSSDP). 2 stretches are compositionally biased toward basic and acidic residues: residues 1164–1183 (DGAREREDTMEASRHPETKW) and 1194–1217 (YKERALQKDGSCKDSPNKLSHIGD). Low complexity predominate over residues 1219–1236 (SCSSHSSSNTLSSNTSSN). A Phosphoserine modification is found at Ser1244. Residues 1337 to 1360 (SEISSHSSGSHHSGSPSAHCSKSS) are compositionally biased toward low complexity. Phosphoserine is present on residues Ser1461, Ser1472, Ser1478, Ser1488, Ser1549, Ser1552, and Ser1591. A coiled-coil region spans residues 1654 to 1712 (LTGKVNQLELILRQLQTDLRKEKQDKAVLQAEVQHLRQDNMRLQEESQTATAQLRKFTE).

In Homo sapiens (Human), this protein is Signal-induced proliferation-associated 1-like protein 2 (SIPA1L2).